Here is a 478-residue protein sequence, read N- to C-terminus: UBP1-associated protein 2A (478 aa).

The segment at Met-1–Ile-99 is disordered. Residues Gly-41–Thr-75 show a composition bias toward acidic residues. RRM domains lie at Arg-140–Lys-217 and Lys-245–Lys-328. Disordered stretches follow at residues Ile-321 to Gly-359 and Gly-442 to His-478. Over residues Gly-442–Pro-456 the composition is skewed to low complexity. Gly residues predominate over residues Gly-457–Pro-470.

In terms of assembly, interacts with UBA1A, UBA2A, UBP1A, UBP1B, UBP1C and SRK2E. As to expression, expressed in young leaves, flowers and embryos.

The protein localises to the nucleus. Heterogeneous nuclear ribonucleoprotein (hnRNP)-like protein that acts as a component of a complex regulating the turnover of mRNAs in the nucleus. Binds with high affinity to RNA molecules that contain U-rich sequences in 3'-UTRs. May function in complex with UBP1 and contribute to the stabilization of mRNAs in the nucleus. However, unlike UBP1, UBA2A does not stimulate pre-mRNA splicing. The chain is UBP1-associated protein 2A (UBA2A) from Arabidopsis thaliana (Mouse-ear cress).